Here is a 172-residue protein sequence, read N- to C-terminus: Shikimate kinase (172 aa).

ATP is bound at residue 11–16 (GTGKTA). Threonine 15 serves as a coordination point for Mg(2+). Substrate-binding residues include aspartate 33, arginine 57, and glycine 79. Arginine 117 lines the ATP pocket. Arginine 136 is a binding site for substrate.

The protein belongs to the shikimate kinase family. Monomer. The cofactor is Mg(2+).

The protein resides in the cytoplasm. It carries out the reaction shikimate + ATP = 3-phosphoshikimate + ADP + H(+). Its pathway is metabolic intermediate biosynthesis; chorismate biosynthesis; chorismate from D-erythrose 4-phosphate and phosphoenolpyruvate: step 5/7. In terms of biological role, catalyzes the specific phosphorylation of the 3-hydroxyl group of shikimic acid using ATP as a cosubstrate. This is Shikimate kinase from Pelotomaculum thermopropionicum (strain DSM 13744 / JCM 10971 / SI).